We begin with the raw amino-acid sequence, 333 residues long: NADH-quinone oxidoreductase subunit H (333 aa).

The next 8 helical transmembrane spans lie at 15–35 (LVIF…FVTY), 88–108 (FILA…TLPF), 117–137 (IGVG…GVVA), 159–179 (ISYE…TGSL), 191–211 (VWYI…AVAE), 250–270 (LFAM…PVMF), 273–293 (FIPG…VLIW), and 313–333 (VLFP…ELFF).

The protein belongs to the complex I subunit 1 family. As to quaternary structure, NDH-1 is composed of 14 different subunits. Subunits NuoA, H, J, K, L, M, N constitute the membrane sector of the complex.

The protein localises to the cell membrane. The enzyme catalyses a quinone + NADH + 5 H(+)(in) = a quinol + NAD(+) + 4 H(+)(out). Its function is as follows. NDH-1 shuttles electrons from NADH, via FMN and iron-sulfur (Fe-S) centers, to quinones in the respiratory chain. The immediate electron acceptor for the enzyme in this species is believed to be ubiquinone. Couples the redox reaction to proton translocation (for every two electrons transferred, four hydrogen ions are translocated across the cytoplasmic membrane), and thus conserves the redox energy in a proton gradient. This subunit may bind ubiquinone. In Geobacillus sp. (strain WCH70), this protein is NADH-quinone oxidoreductase subunit H.